The sequence spans 338 residues: 2-oxoglutarate-dependent dioxygenase ecdG (338 aa).

In terms of domain architecture, Fe2OG dioxygenase spans 165–273 (PSVTNLGFLR…KYTLAYFVRP (109 aa)). Positions 190, 192, and 249 each coordinate Fe cation. 2-oxoglutarate is bound at residue lysine 264.

It belongs to the iron/ascorbate-dependent oxidoreductase family. Fe(2+) is required as a cofactor.

The protein operates within antifungal biosynthesis. 2-oxoglutarate-dependent dioxygenase; part of the gene cluster that mediates the biosynthesis of echinocandin B, a fungal lipidated cyclic hexapeptide that acts as an antifungal agent. Linoleoyl-AMP, produced by the fatty-acyl-AMP ligase ecdI, is transferred to the initiation carrier domain (T0) of ecdA. The linoleoyl-S-phosphopantetheinyl-T0 is sequentially extended with L-ornithine, L-threonine, L-proline, L-homotyrosine, L-threonine, and 4R-methyl-L-proline to form the linear hexapeptide. Thereafter, the terminal condensation (C7) performs macrocyclization of the NRPS product and the cyclic scaffold is released from ecdA. All six of the amino acid residues are hydroxylated, including 4R,5R-dihydroxy-L-ornithine, 4R-hydroxyl-L-proline, 3S,4S-dihydroxy-L-homotyrosine, and 3S-hydroxyl-4S-methyl-L-prolin. In the pathway, all the hydroxylation reactions are proposed to occur following completion of the cyclic peptide, so the unhydroxylated precursor produced by ecdA will undergo six rounds of hydroxylation. Five hydroxylase genes (ecdG, ecdH, ecdK, htyE and htyF) are embedded within the echinocandin B (ecd) and L-homotyrosine (hty) clusters. The sequence is that of 2-oxoglutarate-dependent dioxygenase ecdG from Aspergillus rugulosus (Emericella rugulosa).